Reading from the N-terminus, the 117-residue chain is Putative small ubiquitin-related modifier 6 (117 aa).

Positions Met1–His30 are disordered. Positions Gly10–Ser28 are enriched in basic and acidic residues. The Ubiquitin-like domain maps to Val31–Gly108. Residue Gly108 forms a Glycyl lysine isopeptide (Gly-Lys) (interchain with K-? in acceptor proteins) linkage.

It belongs to the ubiquitin family. SUMO subfamily. In terms of assembly, interacts with SAE2, SCE1, SIZ1 and MMS21 Covalently attached to a number of proteins.

It is found in the nucleus. It localises to the cytoplasm. Functionally, ubiquitin-like protein which can be covalently attached to target lysines as a monomer. Does not seem to be involved in protein degradation and may function as an antagonist of ubiquitin in the degradation process. In Arabidopsis thaliana (Mouse-ear cress), this protein is Putative small ubiquitin-related modifier 6 (SUMO6).